A 1165-amino-acid chain; its full sequence is DNA-directed RNA polymerase subunit beta (1165 aa).

The protein belongs to the RNA polymerase beta chain family. The RNAP catalytic core consists of 2 alpha, 1 beta, 1 beta' and 1 omega subunit. When a sigma factor is associated with the core the holoenzyme is formed, which can initiate transcription.

It catalyses the reaction RNA(n) + a ribonucleoside 5'-triphosphate = RNA(n+1) + diphosphate. Functionally, DNA-dependent RNA polymerase catalyzes the transcription of DNA into RNA using the four ribonucleoside triphosphates as substrates. The polypeptide is DNA-directed RNA polymerase subunit beta (Leifsonia xyli subsp. xyli (strain CTCB07)).